Reading from the N-terminus, the 96-residue chain is Aspartyl/glutamyl-tRNA(Asn/Gln) amidotransferase subunit C (96 aa).

The protein belongs to the GatC family. Heterotrimer of A, B and C subunits.

The enzyme catalyses L-glutamyl-tRNA(Gln) + L-glutamine + ATP + H2O = L-glutaminyl-tRNA(Gln) + L-glutamate + ADP + phosphate + H(+). The catalysed reaction is L-aspartyl-tRNA(Asn) + L-glutamine + ATP + H2O = L-asparaginyl-tRNA(Asn) + L-glutamate + ADP + phosphate + 2 H(+). Its function is as follows. Allows the formation of correctly charged Asn-tRNA(Asn) or Gln-tRNA(Gln) through the transamidation of misacylated Asp-tRNA(Asn) or Glu-tRNA(Gln) in organisms which lack either or both of asparaginyl-tRNA or glutaminyl-tRNA synthetases. The reaction takes place in the presence of glutamine and ATP through an activated phospho-Asp-tRNA(Asn) or phospho-Glu-tRNA(Gln). The protein is Aspartyl/glutamyl-tRNA(Asn/Gln) amidotransferase subunit C of Leptospira interrogans serogroup Icterohaemorrhagiae serovar copenhageni (strain Fiocruz L1-130).